Consider the following 337-residue polypeptide: Transcription initiation factor IIB (337 aa).

The segment at 37–68 adopts a TFIIB-type zinc-finger fold; sequence YTVECPECGSRALVRDYERAELVCSECGLVID. Zn(2+) contacts are provided by C41, C44, C60, and C63. 2 tandem repeats follow at residues 154 to 237 and 248 to 329.

This sequence belongs to the TFIIB family.

Functionally, stabilizes TBP binding to an archaeal box-A promoter. Also responsible for recruiting RNA polymerase II to the pre-initiation complex (DNA-TBP-TFIIB). This Methanothrix thermoacetophila (strain DSM 6194 / JCM 14653 / NBRC 101360 / PT) (Methanosaeta thermophila) protein is Transcription initiation factor IIB.